The following is a 344-amino-acid chain: Follistatin (344 aa).

Residues 1 to 29 form the signal peptide; sequence MVRPRHQPGGLCLLLLLLCQFMEDRSAQA. The TB domain occupies 30-103; the sequence is GNCWLRQAKN…TCDNVDCGPG (74 aa). 18 cysteine pairs are disulfide-bonded: cysteine 32–cysteine 55, cysteine 42–cysteine 88, cysteine 56–cysteine 91, cysteine 95–cysteine 106, cysteine 100–cysteine 116, cysteine 118–cysteine 150, cysteine 122–cysteine 143, cysteine 132–cysteine 164, cysteine 168–cysteine 179, cysteine 173–cysteine 189, cysteine 192–cysteine 225, cysteine 196–cysteine 218, cysteine 207–cysteine 239, cysteine 245–cysteine 256, cysteine 250–cysteine 267, cysteine 270–cysteine 302, cysteine 274–cysteine 295, and cysteine 284–cysteine 316. Residues 94-117 enclose the Follistatin-like 1 domain; sequence TCDNVDCGPGKKCRMNKKNKPRCV. The Kazal-like 1 domain maps to 112 to 166; sequence NKPRCVCAPDCSNITWKGPVCGLDGKTYRNECALLKARCKEQPELEVQYQGKCKK. The N-linked (GlcNAc...) asparagine glycan is linked to asparagine 124. The Follistatin-like 2 domain occupies 167-190; that stretch reads TCRDVNCPGSSTCVVDQTNNAYCV. The Kazal-like 2 domain maps to 186-241; it reads NAYCVTCNRICPEPTSSEQYLCGNDGVTYSSACHLRKATCLLGRSIGLAYEGKCIK. Positions 244 to 268 constitute a Follistatin-like 3 domain; that stretch reads SCEDIQCTGGKKCLWDFKVGRGRCS. In terms of domain architecture, Kazal-like 3 spans 264 to 318; the sequence is RGRCSLCDELCPDSKSEEPVCASDNATYASECAMKEAACSSGVLLEVKHSGSCNS. The N-linked (GlcNAc...) asparagine glycan is linked to asparagine 288. The tract at residues 314–344 is disordered; sequence GSCNSISEDTEEEEEDEDQDYSFPISSILEW. Positions 321–333 are enriched in acidic residues; it reads EDTEEEEEDEDQD.

As to quaternary structure, interacts with GDF11. Interacts with activin A/INHBA. Interacts with myostatin/MSTN.

Its subcellular location is the secreted. It localises to the nucleus. The protein localises to the nucleolus. Its function is as follows. Multifunctional regulatory protein whose primary function is to antagonize members of the transforming growth factor beta (TGF-beta) superfamily including activin, myostatin, GDF11 or bone morphogenetic proteins (BMPs). Mechanistically, binds to these ligands in the extracellular space, blocking their type II receptor-binding site to inhibit downstream signaling. Plays an essential role in muscle fiber formation and growth both by preventing the repressive effects of myostatin and through SMAD3/AKT/mTOR signaling independently of myostatin. Also promotes neural differentiation by antagonizing the action BMP4. Acts as a specific inhibitor of the biosynthesis and secretion of pituitary follicle stimulating hormone (FSH) by sequestering activin A/INHBA. On the other hand, translocates into the nucleus where it down-regulates rRNA synthesis and ribosome biogenesis to maintain cellular energy homeostasis by binding to rDNA. The protein is Follistatin of Equus caballus (Horse).